Consider the following 1090-residue polypeptide: Exocyst complex component SEC5B (1090 aa).

A compositionally biased stretch (acidic residues) spans 1-12 (MSSSDDLDEDEL). The interval 1-126 (MSSSDDLDED…ARKEDDRAWD (126 aa)) is disordered. A compositionally biased stretch (polar residues) spans 23-46 (RDVTYQKPPSANSRKPVTNLVQQP). Positions 52 to 62 (AAAPPSKGGAK) are enriched in low complexity. Residues 96–109 (GGGGDGGGGRGRGG) are compositionally biased toward gly residues. A compositionally biased stretch (basic and acidic residues) spans 110–126 (SGKERGRARKEDDRAWD). Ser-179 is subject to Phosphoserine. Positions 486–502 (VQLSDDTSSMEDNQVQV) are enriched in polar residues. 3 disordered regions span residues 486–511 (VQLSDDTSSMEDNQVQVDQPLEESAR), 984–1013 (ETVENNPGGHQRKPTRGSEDAISDDKQSSV), and 1055–1090 (PVAKAAYSRTSTDSPSRNYRESQPMGSPVQARPRRR). Residues 999–1010 (RGSEDAISDDKQ) show a composition bias toward basic and acidic residues. Over residues 1062–1071 (SRTSTDSPSR) the composition is skewed to polar residues.

The protein belongs to the SEC5 family. As to quaternary structure, the exocyst complex is composed of SEC3, SEC5, SEC6, SEC8, SEC10, EXO70A1 and EXO84B.

Component of the exocyst complex involved in the docking of exocytic vesicles with fusion sites on the plasma membrane during regulated or polarized secretion. Involved in polarized cell growth and organ morphogenesis. During cytokinesis, involved in cell plate initiation, cell plate maturation and formation of new primary cell wall. The protein is Exocyst complex component SEC5B (SEC5B) of Arabidopsis thaliana (Mouse-ear cress).